A 336-amino-acid polypeptide reads, in one-letter code: ATP-dependent 6-phosphofructokinase (336 aa).

Residue G11 coordinates ATP. Residue 21-25 (RAVVR) participates in ADP binding. ATP contacts are provided by residues 72 to 73 (RY) and 102 to 105 (GDGS). D103 serves as a coordination point for Mg(2+). 125-127 (TID) is a binding site for substrate. The active-site Proton acceptor is D127. R154 lines the ADP pocket. Substrate contacts are provided by residues R162 and 169–171 (MGR). ADP is bound by residues 185–187 (GAD), K211, and 213–215 (KKH). Substrate is bound by residues E222, R244, and 250–253 (HIQR).

The protein belongs to the phosphofructokinase type A (PFKA) family. ATP-dependent PFK group I subfamily. Prokaryotic clade 'B1' sub-subfamily. In terms of assembly, homotetramer. It depends on Mg(2+) as a cofactor.

The protein localises to the cytoplasm. It carries out the reaction beta-D-fructose 6-phosphate + ATP = beta-D-fructose 1,6-bisphosphate + ADP + H(+). The protein operates within carbohydrate degradation; glycolysis; D-glyceraldehyde 3-phosphate and glycerone phosphate from D-glucose: step 3/4. Allosterically activated by ADP and other diphosphonucleosides, and allosterically inhibited by phosphoenolpyruvate. Functionally, catalyzes the phosphorylation of D-fructose 6-phosphate to fructose 1,6-bisphosphate by ATP, the first committing step of glycolysis. The chain is ATP-dependent 6-phosphofructokinase from Streptococcus sanguinis (strain SK36).